We begin with the raw amino-acid sequence, 309 residues long: Probable porphobilinogen deaminase (309 aa).

Position 233 is an S-(dipyrrolylmethanemethyl)cysteine (C233).

Belongs to the HMBS family. Requires dipyrromethane as cofactor.

The catalysed reaction is 4 porphobilinogen + H2O = hydroxymethylbilane + 4 NH4(+). It functions in the pathway porphyrin-containing compound metabolism; protoporphyrin-IX biosynthesis; coproporphyrinogen-III from 5-aminolevulinate: step 2/4. In terms of biological role, tetrapolymerization of the monopyrrole PBG into the hydroxymethylbilane pre-uroporphyrinogen in several discrete steps. The sequence is that of Probable porphobilinogen deaminase from Methanococcoides burtonii (strain DSM 6242 / NBRC 107633 / OCM 468 / ACE-M).